A 261-amino-acid chain; its full sequence is Cytochrome c oxidase subunit 3 (261 aa).

Topologically, residues 1-15 (MTHQTHAYHMVNPSP) are mitochondrial matrix. Residues 16 to 34 (WPLTGALSALLMTSGLTMW) traverse the membrane as a helical segment. Residues 35 to 40 (FHFNSM) are Mitochondrial intermembrane-facing. The chain crosses the membrane as a helical span at residues 41-66 (TLLTLGLTTNMLTMYQWWRDIIREST). Residues 67-72 (FQGHHT) lie on the Mitochondrial matrix side of the membrane. The helical transmembrane segment at 73–105 (PNVQKGLRYGMILFIISEVLFFTGFFWAFYHSS) threads the bilayer. Residues 106-128 (LAPTPELGGCWPPTGIHPLNPLE) are Mitochondrial intermembrane-facing. A helical transmembrane segment spans residues 129–152 (VPLLNTSVLLASGVSITWAHHSLM). At 153–155 (EGN) the chain is on the mitochondrial matrix side. Residues 156–183 (RNHMLQALFITISLGVYFTLLQASEYYE) traverse the membrane as a helical segment. Residues 184–190 (APFTISD) are Mitochondrial intermembrane-facing. Residues 191 to 223 (GVYGSTFFVATGFHGLHVIIGSTFLIVCFFRQL) traverse the membrane as a helical segment. At 224-232 (KFHFTSNHH) the chain is on the mitochondrial matrix side. Residues 233–256 (FGFEAAAWYWHFVDVVWLFLYVSI) form a helical membrane-spanning segment. The Mitochondrial intermembrane segment spans residues 257-261 (YWWGS).

It belongs to the cytochrome c oxidase subunit 3 family. In terms of assembly, component of the cytochrome c oxidase (complex IV, CIV), a multisubunit enzyme composed of 14 subunits. The complex is composed of a catalytic core of 3 subunits MT-CO1, MT-CO2 and MT-CO3, encoded in the mitochondrial DNA, and 11 supernumerary subunits COX4I, COX5A, COX5B, COX6A, COX6B, COX6C, COX7A, COX7B, COX7C, COX8 and NDUFA4, which are encoded in the nuclear genome. The complex exists as a monomer or a dimer and forms supercomplexes (SCs) in the inner mitochondrial membrane with NADH-ubiquinone oxidoreductase (complex I, CI) and ubiquinol-cytochrome c oxidoreductase (cytochrome b-c1 complex, complex III, CIII), resulting in different assemblies (supercomplex SCI(1)III(2)IV(1) and megacomplex MCI(2)III(2)IV(2)).

It is found in the mitochondrion inner membrane. The catalysed reaction is 4 Fe(II)-[cytochrome c] + O2 + 8 H(+)(in) = 4 Fe(III)-[cytochrome c] + 2 H2O + 4 H(+)(out). Component of the cytochrome c oxidase, the last enzyme in the mitochondrial electron transport chain which drives oxidative phosphorylation. The respiratory chain contains 3 multisubunit complexes succinate dehydrogenase (complex II, CII), ubiquinol-cytochrome c oxidoreductase (cytochrome b-c1 complex, complex III, CIII) and cytochrome c oxidase (complex IV, CIV), that cooperate to transfer electrons derived from NADH and succinate to molecular oxygen, creating an electrochemical gradient over the inner membrane that drives transmembrane transport and the ATP synthase. Cytochrome c oxidase is the component of the respiratory chain that catalyzes the reduction of oxygen to water. Electrons originating from reduced cytochrome c in the intermembrane space (IMS) are transferred via the dinuclear copper A center (CU(A)) of subunit 2 and heme A of subunit 1 to the active site in subunit 1, a binuclear center (BNC) formed by heme A3 and copper B (CU(B)). The BNC reduces molecular oxygen to 2 water molecules using 4 electrons from cytochrome c in the IMS and 4 protons from the mitochondrial matrix. The sequence is that of Cytochrome c oxidase subunit 3 (MT-CO3) from Antidorcas marsupialis (Springbok).